We begin with the raw amino-acid sequence, 420 residues long: UDP-N-acetylglucosamine 1-carboxyvinyltransferase (420 aa).

A phosphoenolpyruvate-binding site is contributed by 22–23 (KN). Arginine 93 is a binding site for UDP-N-acetyl-alpha-D-glucosamine. Cysteine 117 (proton donor) is an active-site residue. 2-(S-cysteinyl)pyruvic acid O-phosphothioketal is present on cysteine 117. UDP-N-acetyl-alpha-D-glucosamine-binding residues include aspartate 307 and isoleucine 329.

Belongs to the EPSP synthase family. MurA subfamily.

The protein resides in the cytoplasm. The catalysed reaction is phosphoenolpyruvate + UDP-N-acetyl-alpha-D-glucosamine = UDP-N-acetyl-3-O-(1-carboxyvinyl)-alpha-D-glucosamine + phosphate. It participates in cell wall biogenesis; peptidoglycan biosynthesis. Its function is as follows. Cell wall formation. Adds enolpyruvyl to UDP-N-acetylglucosamine. This Alcanivorax borkumensis (strain ATCC 700651 / DSM 11573 / NCIMB 13689 / SK2) protein is UDP-N-acetylglucosamine 1-carboxyvinyltransferase.